Reading from the N-terminus, the 117-residue chain is Large ribosomal subunit protein bL20 (117 aa).

It belongs to the bacterial ribosomal protein bL20 family.

Binds directly to 23S ribosomal RNA and is necessary for the in vitro assembly process of the 50S ribosomal subunit. It is not involved in the protein synthesizing functions of that subunit. The sequence is that of Large ribosomal subunit protein bL20 from Solidesulfovibrio magneticus (strain ATCC 700980 / DSM 13731 / RS-1) (Desulfovibrio magneticus).